A 33-amino-acid chain; its full sequence is Gastrin (33 aa).

The segment at 1-21 (ELEPQGPPHLGTDLSKKQGPW) is disordered. A Pyrrolidone carboxylic acid modification is found at Q18. Sulfotyrosine is present on Y28. At F33 the chain carries Phenylalanine amide.

It belongs to the gastrin/cholecystokinin family.

The protein resides in the secreted. In terms of biological role, gastrin stimulates the stomach mucosa to produce and secrete hydrochloric acid and the pancreas to secrete its digestive enzymes. It also stimulates smooth muscle contraction and increases blood circulation and water secretion in the stomach and intestine. The sequence is that of Gastrin (GAST) from Chinchilla chinchilla (Short-tailed chinchilla).